Consider the following 139-residue polypeptide: Protein cornichon homolog 4 (139 aa).

Helical transmembrane passes span 5–25 (VFVF…YFII), 57–77 (LVTV…NLPV), and 118–138 (LGFH…ALIN).

The protein belongs to the cornichon family. Interacts with Sec23/24 complex components SEC24B and SEC24D. Interacts with CCR5. Interacts with ADRB2 in the early secretory pathway.

It localises to the membrane. It is found in the endoplasmic reticulum. The protein resides in the endoplasmic reticulum-Golgi intermediate compartment. In terms of biological role, involved in G protein-coupled receptors (GPCRs) trafficking from the endoplasmic reticulum to the cell surface; it promotes the exit of GPCRs from the early secretory pathway, likely through interaction with the COPII machinery. The polypeptide is Protein cornichon homolog 4 (CNIH4) (Bos taurus (Bovine)).